Here is a 399-residue protein sequence, read N- to C-terminus: 1-deoxy-D-xylulose 5-phosphate reductoisomerase (399 aa).

NADPH contacts are provided by Thr-13, Gly-14, Ser-15, Ile-16, and Asn-127. 1-deoxy-D-xylulose 5-phosphate is bound at residue Lys-128. Position 129 (Glu-129) interacts with NADPH. Asp-153 is a Mn(2+) binding site. The 1-deoxy-D-xylulose 5-phosphate site is built by Ser-154, Glu-155, Ser-187, and His-210. Position 155 (Glu-155) interacts with Mn(2+). Gly-216 contributes to the NADPH binding site. Positions 223, 228, 229, and 232 each coordinate 1-deoxy-D-xylulose 5-phosphate. Position 232 (Glu-232) interacts with Mn(2+).

Belongs to the DXR family. Mg(2+) is required as a cofactor. The cofactor is Mn(2+).

The enzyme catalyses 2-C-methyl-D-erythritol 4-phosphate + NADP(+) = 1-deoxy-D-xylulose 5-phosphate + NADPH + H(+). It participates in isoprenoid biosynthesis; isopentenyl diphosphate biosynthesis via DXP pathway; isopentenyl diphosphate from 1-deoxy-D-xylulose 5-phosphate: step 1/6. Catalyzes the NADPH-dependent rearrangement and reduction of 1-deoxy-D-xylulose-5-phosphate (DXP) to 2-C-methyl-D-erythritol 4-phosphate (MEP). This chain is 1-deoxy-D-xylulose 5-phosphate reductoisomerase, found in Bordetella pertussis (strain Tohama I / ATCC BAA-589 / NCTC 13251).